The following is a 1511-amino-acid chain: ATP-dependent permease PDR12 (1511 aa).

Positions 1–21 are enriched in basic and acidic residues; sequence MSSTDEHIEKDISSRSNHDDD. Positions 1-37 are disordered; the sequence is MSSTDEHIEKDISSRSNHDDDYANSVQSYAASEGQVD. S2 is modified (N-acetylserine). Over 2–508 the chain is Cytoplasmic; sequence SSTDEHIEKD…RGFQRVKGDS (507 aa). S32, S52, and S56 each carry phosphoserine. The region spanning 144 to 397 is the ABC transporter 1 domain; it reads IPAHLISKFT…FQRMGWVKPN (254 aa). Residue K426 forms a Glycyl lysine isopeptide (Lys-Gly) (interchain with G-Cter in ubiquitin) linkage. Residues 509–529 traverse the membrane as a helical segment; it reads TYTKVYLSSFLIKALIIGSMF. At 530 to 548 the chain is on the extracellular side; that stretch reads HKIDDKSQSTTAGAYSRGG. The helical transmembrane segment at 549-569 threads the bilayer; that stretch reads MLFYVLLFASVTSLAEIGNSF. Residues 570-597 are Cytoplasmic-facing; it reads SSRPVIVKHKSYSMYHLSAESLQEIITE. A helical membrane pass occupies residues 598 to 618; the sequence is FPTKFVAIVILCLITYWIPFM. Topologically, residues 619–622 are extracellular; the sequence is KYEA. The helical transmembrane segment at 623–643 threads the bilayer; sequence GAFFQYILYLLTVQQCTSFIF. Residues 644–657 are Cytoplasmic-facing; it reads KFVATMSKSGVDAH. A helical membrane pass occupies residues 658–678; the sequence is AVGGLWVLMLCVYAGFVLPIG. Topologically, residues 679-765 are extracellular; it reads EMHHWIRWLH…FAYKHAWRNW (87 aa). A helical membrane pass occupies residues 766–786; sequence GVNIVWTFGYIVFNVILSEYL. The Cytoplasmic segment spans residues 787-1182; that stretch reads KPVEGGGDLL…WRSPVYIRAK (396 aa). Residues 836–1084 form the ABC transporter 2 domain; the sequence is IAEKDVFTWN…TLLKYFERQS (249 aa). ATP-binding positions include 878 to 885 and 972 to 979; these read GESGAGKT and AEALVGKT. The chain crosses the membrane as a helical span at residues 1183-1203; that stretch reads FFECVACALFVGLSYVGVNHS. A topological domain (extracellular) is located at residue V1204. A helical transmembrane segment spans residues 1205–1225; the sequence is GGAIEAFSSIFMLLLIALAMI. The Cytoplasmic portion of the chain corresponds to 1226-1254; the sequence is NQLHVFAYDSRELYEVREAASNTFHWSVL. The helical transmembrane segment at 1255-1275 threads the bilayer; the sequence is LLCHAAVENFWSTLCQFMCFI. Topologically, residues 1276–1291 are extracellular; the sequence is CYYWPAQFSGRASHAG. Residues 1292 to 1312 form a helical membrane-spanning segment; it reads FFFFFYVLIFPLYFVTYGLWI. The Cytoplasmic portion of the chain corresponds to 1313–1318; that stretch reads LYMSPD. A helical transmembrane segment spans residues 1319-1339; it reads VPSASMINSNLFAAMLLFCGI. At 1340-1444 the chain is on the extracellular side; it reads LQPREKMPAF…NVKWDHRWRN (105 aa). N1405 carries N-linked (GlcNAc...) asparagine glycosylation. The chain crosses the membrane as a helical span at residues 1445-1465; that stretch reads FGFMWAYICFNIAAMLICYYV. Topologically, residues 1466 to 1511 are cytoplasmic; the sequence is VRVKVWSLKSVLNFKKWFNGPRKERHEKDTNIFQTVPGDENKITKK.

It belongs to the ABC transporter superfamily. ABCG family. PDR (TC 3.A.1.205) subfamily.

The protein resides in the cell membrane. Plasma membrane transporter which mediates resistance to water-soluble, monocarboxylic acids with chain lengths of from C1 to C7 by active extrusion of the preservative anions from the cytosol. Also involved in the export of aromatic and branched-chain organic acids produced in amino acid catabolism. The polypeptide is ATP-dependent permease PDR12 (PDR12) (Saccharomyces cerevisiae (strain ATCC 204508 / S288c) (Baker's yeast)).